The following is a 456-amino-acid chain: Trigger factor (456 aa).

One can recognise a PPIase FKBP-type domain in the interval Gly192 to Pro277.

It belongs to the FKBP-type PPIase family. Tig subfamily.

It localises to the cytoplasm. It carries out the reaction [protein]-peptidylproline (omega=180) = [protein]-peptidylproline (omega=0). Its function is as follows. Involved in protein export. Acts as a chaperone by maintaining the newly synthesized protein in an open conformation. Functions as a peptidyl-prolyl cis-trans isomerase. This chain is Trigger factor, found in Streptococcus pyogenes serotype M12 (strain MGAS9429).